The following is a 105-amino-acid chain: uncharacterized protein (105 aa).

It is found in the mitochondrion. This is an uncharacterized protein from Paramecium tetraurelia.